The sequence spans 164 residues: UPF0304 protein MS2240 (164 aa).

Belongs to the UPF0304 family.

The chain is UPF0304 protein MS2240 from Mannheimia succiniciproducens (strain KCTC 0769BP / MBEL55E).